Here is a 200-residue protein sequence, read N- to C-terminus: Inner membrane-spanning protein YciB (200 aa).

A run of 6 helical transmembrane segments spans residues 1–21 (MPPLLKLALELGPLLVFFFAN), 37–57 (IGAPIFLATALFMAATVIALA), 66–86 (LAIMPLVSGIVVLVFGALTLW), 103–123 (LFGGILLGGLFFGKSLLGYVF), 136–156 (KLTLRWGLFFIFLAIVNEIVW), and 167–187 (FKVWGIMPITIVFTLLQMPLI).

This sequence belongs to the YciB family.

The protein resides in the cell inner membrane. Functionally, plays a role in cell envelope biogenesis, maintenance of cell envelope integrity and membrane homeostasis. The polypeptide is Inner membrane-spanning protein YciB (Brucella melitensis biotype 1 (strain ATCC 23456 / CCUG 17765 / NCTC 10094 / 16M)).